The following is a 317-amino-acid chain: Melanocyte-stimulating hormone receptor (317 aa).

The segment at 1 to 28 is disordered; sequence MPMQGAQGRLRGSLNATPPTTPHSGLAG. Topologically, residues 1–37 are extracellular; that stretch reads MPMQGAQGRLRGSLNATPPTTPHSGLAGNQTGPWCLE. A glycan (N-linked (GlcNAc...) asparagine) is linked at Asn29. The helical transmembrane segment at 38–63 threads the bilayer; the sequence is VSIPDELFLSLGLVSLVENMLVVAAI. The Cytoplasmic portion of the chain corresponds to 64–72; it reads AKNRNLHSP. A helical membrane pass occupies residues 73-93; it reads MYYFICCLAVSDLLVSVSNVL. Topologically, residues 94 to 118 are extracellular; sequence ETAVMLLLEAGVLAAWAGVVQQLDN. The chain crosses the membrane as a helical span at residues 119-140; the sequence is AIDVFICGSMVSSLCFLGAIAV. At 141-163 the chain is on the cytoplasmic side; the sequence is DRYITIFYALRYHSIVTLPRARW. A helical membrane pass occupies residues 164 to 183; that stretch reads AIATIWAASVVCSTLFIAYY. Over 184-191 the chain is Extracellular; it reads DCTAVLLC. The helical transmembrane segment at 192–211 threads the bilayer; sequence LVSFFLALVVLMAVLYMHML. At 212–240 the chain is on the cytoplasmic side; that stretch reads ARACLHARSIARLHKRWRPVHQGLGLKGA. Residues 241-266 form a helical membrane-spanning segment; sequence ATLSILLGSFFLCWGPFFLHLTLIVL. Topologically, residues 267-279 are extracellular; sequence CPQHPTCSCVFKN. The chain crosses the membrane as a helical span at residues 280 to 300; sequence FKLFLTLIICNSIVDPLIYAF. Residues 301-317 are Cytoplasmic-facing; the sequence is RSQELRKTLKEVLLCSW. Residue Cys315 is the site of S-palmitoyl cysteine attachment.

The protein belongs to the G-protein coupled receptor 1 family. As to quaternary structure, interacts with MGRN1, but does not undergo MGRN1-mediated ubiquitination; this interaction competes with GNAS-binding and thus inhibits agonist-induced cAMP production. Interacts with OPN3; the interaction results in a decrease in MC1R-mediated cAMP signaling and ultimately a decrease in melanin production in melanocytes.

Its subcellular location is the cell membrane. In terms of biological role, receptor for MSH (alpha, beta and gamma) and ACTH. The activity of this receptor is mediated by G proteins which activate adenylate cyclase. Mediates melanogenesis, the production of eumelanin (black/brown) and phaeomelanin (red/yellow), via regulation of cAMP signaling in melanocytes. In Mammuthus primigenius (Siberian woolly mammoth), this protein is Melanocyte-stimulating hormone receptor (MC1R).